Consider the following 95-residue polypeptide: Small ubiquitin-related modifier 4 (95 aa).

Positions 17–95 (HINLKVAGQD…VFQQPTGGVY (79 aa)) constitute a Ubiquitin-like domain. Glycine 93 is covalently cross-linked (Glycyl lysine isopeptide (Gly-Lys) (interchain with K-? in acceptor proteins)). The propeptide occupies 94 to 95 (VY).

Belongs to the ubiquitin family. SUMO subfamily. In terms of assembly, interacts with SAE2. Covalently attached to a number of proteins. In terms of processing, in contrast to SUMO1, SUMO2 and SUMO3, seems to be insensitive to sentrin-specific proteases due to the presence of Pro-90. This may impair processing to mature form and conjugation to substrates. In terms of tissue distribution, expressed mainly in adult and embryonic kidney. Expressed at various levels in immune tissues, with the highest expression in the lymph node and spleen.

In terms of biological role, ubiquitin-like protein which can be covalently attached to target lysines as a monomer. Does not seem to be involved in protein degradation and may modulate protein subcellular localization, stability or activity. Upon oxidative stress, conjugates to various anti-oxidant enzymes, chaperones, and stress defense proteins. May also conjugate to NFKBIA, TFAP2A and FOS, negatively regulating their transcriptional activity, and to NR3C1, positively regulating its transcriptional activity. Covalent attachment to its substrates requires prior activation by the E1 complex SAE1-SAE2 and linkage to the E2 enzyme UBE2I. The chain is Small ubiquitin-related modifier 4 (SUMO4) from Homo sapiens (Human).